The following is a 959-amino-acid chain: Translation initiation factor IF-2 (959 aa).

Residues 1–10 (MSDKTNDDKT) are compositionally biased toward basic and acidic residues. Positions 1 to 374 (MSDKTNDDKT…SQMQETREKI (374 aa)) are disordered. The segment covering 27 to 37 (EQSTVRQNFSH) has biased composition (polar residues). Low complexity-rich tracts occupy residues 63 to 118 (AAAA…VTKP) and 128 to 138 (QRPGGQQAQRP). Composition is skewed to basic and acidic residues over residues 154–225 (SEMD…EAAK) and 232–241 (ARSERRDDAR). A compositionally biased stretch (low complexity) spans 246–284 (GARPQQAGRPQGGRPQPAGRPQQGSPRPAPIIADAAPIA). Residues 318–333 (PEVRAPKVVKGEDDRR) are compositionally biased toward basic and acidic residues. The 170-residue stretch at 457–626 (SRPPVVTIMG…LLQAEMLDLK (170 aa)) folds into the tr-type G domain. Residues 466–473 (GHVDHGKT) are G1. 466-473 (GHVDHGKT) is a GTP binding site. The segment at 491–495 (GITQH) is G2. The tract at residues 512–515 (DTPG) is G3. Residues 512–516 (DTPGH) and 566–569 (NKID) each bind GTP. The G4 stretch occupies residues 566–569 (NKID). The G5 stretch occupies residues 602 to 604 (SAK).

The protein belongs to the TRAFAC class translation factor GTPase superfamily. Classic translation factor GTPase family. IF-2 subfamily.

The protein resides in the cytoplasm. Functionally, one of the essential components for the initiation of protein synthesis. Protects formylmethionyl-tRNA from spontaneous hydrolysis and promotes its binding to the 30S ribosomal subunits. Also involved in the hydrolysis of GTP during the formation of the 70S ribosomal complex. The chain is Translation initiation factor IF-2 from Brucella melitensis biotype 1 (strain ATCC 23456 / CCUG 17765 / NCTC 10094 / 16M).